The primary structure comprises 22 residues: Short-chain-enoyl-CoA hydratase (22 aa).

It belongs to the enoyl-CoA hydratase/isomerase family.

It catalyses the reaction a short-chain (3S)-3-hydroxyacyl-CoA = a short-chain (2E)-enoyl-CoA + H2O. It participates in lipid metabolism; butanoate metabolism. This chain is Short-chain-enoyl-CoA hydratase (crt), found in Clostridium pasteurianum.